A 374-amino-acid chain; its full sequence is Actin-related protein 2/3 complex subunit 2B (374 aa).

The protein belongs to the ARPC2 family. As to quaternary structure, component of the Arp2/3 complex composed of ARP2, ARP3, ARPC1/p41-ARC, ARPC2/p34-ARC, ARPC3/p21-ARC, ARPC4/p20-ARC and ARPC5/p16-ARC. Expressed at low levels in all tissues with a relatively highest expression in inflorescences.

Its subcellular location is the cytoplasm. It is found in the cytoskeleton. It localises to the cell projection. Functions as actin-binding component of the Arp2/3 complex which is involved in regulation of actin polymerization and together with an activating nucleation-promoting factor (NPF) mediates the formation of branched actin networks. Seems to contact the mother actin filament. Arp2/3 complex plays a critical role in the control of cell morphogenesis via the modulation of cell polarity development. This is Actin-related protein 2/3 complex subunit 2B (ARPC2B) from Arabidopsis thaliana (Mouse-ear cress).